The primary structure comprises 65 residues: Large ribosomal subunit protein bL35 (65 aa).

Residues 20–42 (GKVRRHHANASHIMTTKTTKRKR) are disordered.

This sequence belongs to the bacterial ribosomal protein bL35 family.

The chain is Large ribosomal subunit protein bL35 from Syntrophus aciditrophicus (strain SB).